The following is a 446-amino-acid chain: tRNA-2-methylthio-N(6)-dimethylallyladenosine synthase (446 aa).

Residues 3–120 (KKIYIKTFGC…LPEMLKQRRS (118 aa)) enclose the MTTase N-terminal domain. Residues C12, C49, C83, C157, C161, and C164 each contribute to the [4Fe-4S] cluster site. One can recognise a Radical SAM core domain in the interval 143-375 (KVEGATAFVS…QAVIDQNTRR (233 aa)). Residues 378 to 444 (DEMVGSVQRI…AYTLRGEIVV (67 aa)) enclose the TRAM domain.

This sequence belongs to the methylthiotransferase family. MiaB subfamily. As to quaternary structure, monomer. [4Fe-4S] cluster is required as a cofactor.

Its subcellular location is the cytoplasm. The enzyme catalyses N(6)-dimethylallyladenosine(37) in tRNA + (sulfur carrier)-SH + AH2 + 2 S-adenosyl-L-methionine = 2-methylsulfanyl-N(6)-dimethylallyladenosine(37) in tRNA + (sulfur carrier)-H + 5'-deoxyadenosine + L-methionine + A + S-adenosyl-L-homocysteine + 2 H(+). Its function is as follows. Catalyzes the methylthiolation of N6-(dimethylallyl)adenosine (i(6)A), leading to the formation of 2-methylthio-N6-(dimethylallyl)adenosine (ms(2)i(6)A) at position 37 in tRNAs that read codons beginning with uridine. In Herminiimonas arsenicoxydans, this protein is tRNA-2-methylthio-N(6)-dimethylallyladenosine synthase.